A 204-amino-acid chain; its full sequence is MIGKLKGTIEEIGEDYALVDVHGVCYVAYCSARTLSRLGSVGEACILFIETYVREDQIRLFGFMAVLEREWFNLLQTVQGVGAKVALALLSTLTPSELANAIALQDRTAVSRAPGVGPKVAMRIVTELKNKVPAFAGEATNIGFKQELGEGVAPAPVSDAVSALTNLGYSRDQAANAIAAAMKVAGDEADSAKLIRLGLKELSR.

The interval M1–M64 is domain I. The segment at A65–G143 is domain II. The interval F144–G151 is flexible linker. Residues V152–R204 are domain III.

Belongs to the RuvA family. Homotetramer. Forms an RuvA(8)-RuvB(12)-Holliday junction (HJ) complex. HJ DNA is sandwiched between 2 RuvA tetramers; dsDNA enters through RuvA and exits via RuvB. An RuvB hexamer assembles on each DNA strand where it exits the tetramer. Each RuvB hexamer is contacted by two RuvA subunits (via domain III) on 2 adjacent RuvB subunits; this complex drives branch migration. In the full resolvosome a probable DNA-RuvA(4)-RuvB(12)-RuvC(2) complex forms which resolves the HJ.

Its subcellular location is the cytoplasm. The RuvA-RuvB-RuvC complex processes Holliday junction (HJ) DNA during genetic recombination and DNA repair, while the RuvA-RuvB complex plays an important role in the rescue of blocked DNA replication forks via replication fork reversal (RFR). RuvA specifically binds to HJ cruciform DNA, conferring on it an open structure. The RuvB hexamer acts as an ATP-dependent pump, pulling dsDNA into and through the RuvAB complex. HJ branch migration allows RuvC to scan DNA until it finds its consensus sequence, where it cleaves and resolves the cruciform DNA. The chain is Holliday junction branch migration complex subunit RuvA from Rhizobium rhizogenes (strain K84 / ATCC BAA-868) (Agrobacterium radiobacter).